Consider the following 178-residue polypeptide: Large ribosomal subunit protein uL6 (178 aa).

Belongs to the universal ribosomal protein uL6 family. Part of the 50S ribosomal subunit.

Its function is as follows. This protein binds to the 23S rRNA, and is important in its secondary structure. It is located near the subunit interface in the base of the L7/L12 stalk, and near the tRNA binding site of the peptidyltransferase center. This chain is Large ribosomal subunit protein uL6, found in Campylobacter curvus (strain 525.92).